Reading from the N-terminus, the 228-residue chain is ATP-dependent dethiobiotin synthetase BioD (228 aa).

Position 13 to 18 (13 to 18) interacts with ATP; the sequence is DIGKTF. Thr-17 contacts Mg(2+). The active site involves Lys-38. Ser-42 is a binding site for substrate. ATP contacts are provided by residues Asp-55, 116–119, 179–180, and 208–210; these read EGSG, NK, and PKI. Positions 55 and 116 each coordinate Mg(2+).

It belongs to the dethiobiotin synthetase family. In terms of assembly, homodimer. Requires Mg(2+) as cofactor.

It localises to the cytoplasm. The enzyme catalyses (7R,8S)-7,8-diammoniononanoate + CO2 + ATP = (4R,5S)-dethiobiotin + ADP + phosphate + 3 H(+). The protein operates within cofactor biosynthesis; biotin biosynthesis; biotin from 7,8-diaminononanoate: step 1/2. Its function is as follows. Catalyzes a mechanistically unusual reaction, the ATP-dependent insertion of CO2 between the N7 and N8 nitrogen atoms of 7,8-diaminopelargonic acid (DAPA, also called 7,8-diammoniononanoate) to form a ureido ring. This chain is ATP-dependent dethiobiotin synthetase BioD, found in Clostridium perfringens (strain ATCC 13124 / DSM 756 / JCM 1290 / NCIMB 6125 / NCTC 8237 / Type A).